Here is a 450-residue protein sequence, read N- to C-terminus: Glutathione reductase (450 aa).

FAD contacts are provided by serine 14, glycine 15, glutamate 34, threonine 41, cysteine 42, lysine 50, and alanine 115. Serine 14 is a glutathione binding site. A disulfide bridge connects residues cysteine 42 and cysteine 47. 6 residues coordinate NADP(+): alanine 175, isoleucine 178, glutamate 181, arginine 198, arginine 204, and glycine 262. FAD is bound at residue aspartate 303. Aspartate 309 is an NADP(+) binding site. Threonine 311 is a binding site for FAD. Arginine 319 serves as a coordination point for glutathione. Valine 342 contributes to the NADP(+) binding site. Histidine 439 contacts FAD. The active-site Proton acceptor is histidine 439.

This sequence belongs to the class-I pyridine nucleotide-disulfide oxidoreductase family. As to quaternary structure, homodimer. FAD is required as a cofactor.

It localises to the cytoplasm. It carries out the reaction 2 glutathione + NADP(+) = glutathione disulfide + NADPH + H(+). Its function is as follows. Catalyzes the reduction of glutathione disulfide (GSSG) to reduced glutathione (GSH). Constitutes the major mechanism to maintain a high GSH:GSSG ratio in the cytosol. This Streptococcus thermophilus protein is Glutathione reductase (gor).